We begin with the raw amino-acid sequence, 350 residues long: Nicotinate-nucleotide--dimethylbenzimidazole phosphoribosyltransferase (350 aa).

Catalysis depends on Glu316, which acts as the Proton acceptor.

This sequence belongs to the CobT family.

It carries out the reaction 5,6-dimethylbenzimidazole + nicotinate beta-D-ribonucleotide = alpha-ribazole 5'-phosphate + nicotinate + H(+). It functions in the pathway nucleoside biosynthesis; alpha-ribazole biosynthesis; alpha-ribazole from 5,6-dimethylbenzimidazole: step 1/2. In terms of biological role, catalyzes the synthesis of alpha-ribazole-5'-phosphate from nicotinate mononucleotide (NAMN) and 5,6-dimethylbenzimidazole (DMB). The protein is Nicotinate-nucleotide--dimethylbenzimidazole phosphoribosyltransferase of Pseudomonas syringae pv. syringae (strain B728a).